We begin with the raw amino-acid sequence, 30 residues long: Trypsin inhibitor 4 (30 aa).

3 cysteine pairs are disulfide-bonded: cysteine 3-cysteine 20, cysteine 10-cysteine 22, and cysteine 16-cysteine 28.

The protein belongs to the protease inhibitor I7 (squash-type serine protease inhibitor) family.

The protein resides in the secreted. Inhibits trypsin; probably participates in a plant defense mechanism. The polypeptide is Trypsin inhibitor 4 (Momordica charantia (Bitter gourd)).